Here is a 944-residue protein sequence, read N- to C-terminus: Translation initiation factor IF-2 (944 aa).

Residues 61-281 (IQANQPAKNP…TAKNNKSHKI (221 aa)) form a disordered region. Residues 132–150 (TFENQTPPTENTPKVVSHS) show a composition bias toward polar residues. Residues 151 to 169 (QIEKAKQKLQEIQKSREAL) show a composition bias toward basic and acidic residues. Residues 175–185 (SNANNASNTNN) show a composition bias toward low complexity. Positions 186-203 (AKKEISEVKKQEQEIKRH) are enriched in basic and acidic residues. The segment covering 204–215 (ENIKRRTGFRVI) has biased composition (basic residues). Residues 244–259 (EDIKKEWQEKDKQEAK) are compositionally biased toward basic and acidic residues. The tr-type G domain occupies 443–612 (ERPPVVTIMG…LIQADIMELK (170 aa)). The segment at 452 to 459 (GHVDHGKT) is G1. 452–459 (GHVDHGKT) contacts GTP. The interval 477–481 (GITQH) is G2. A G3 region spans residues 498–501 (DTPG). GTP-binding positions include 498–502 (DTPGH) and 552–555 (NKMD). A G4 region spans residues 552–555 (NKMD). Residues 588–590 (SAK) form a G5 region.

It belongs to the TRAFAC class translation factor GTPase superfamily. Classic translation factor GTPase family. IF-2 subfamily.

Its subcellular location is the cytoplasm. In terms of biological role, one of the essential components for the initiation of protein synthesis. Protects formylmethionyl-tRNA from spontaneous hydrolysis and promotes its binding to the 30S ribosomal subunits. Also involved in the hydrolysis of GTP during the formation of the 70S ribosomal complex. This Helicobacter pylori (strain HPAG1) protein is Translation initiation factor IF-2.